The sequence spans 361 residues: tRNA-specific 2-thiouridylase MnmA (361 aa).

ATP-binding positions include 9 to 16 (GMSGGVDS) and Met35. The interaction with target base in tRNA stretch occupies residues 95-97 (NPD). The active-site Nucleophile is the Cys100. A disulfide bridge connects residues Cys100 and Cys196. ATP is bound at residue Gly124. The interval 146-148 (KDQ) is interaction with tRNA. The active-site Cysteine persulfide intermediate is the Cys196. An interaction with tRNA region spans residues 308–309 (RY).

This sequence belongs to the MnmA/TRMU family.

It localises to the cytoplasm. It catalyses the reaction S-sulfanyl-L-cysteinyl-[protein] + uridine(34) in tRNA + AH2 + ATP = 2-thiouridine(34) in tRNA + L-cysteinyl-[protein] + A + AMP + diphosphate + H(+). Functionally, catalyzes the 2-thiolation of uridine at the wobble position (U34) of tRNA, leading to the formation of s(2)U34. This is tRNA-specific 2-thiouridylase MnmA from Nitrosomonas eutropha (strain DSM 101675 / C91 / Nm57).